The primary structure comprises 170 residues: Bacilliredoxin SRU_1493 (170 aa).

The segment at 140-170 is disordered; it reads CGDEEPPADAPSRPDPSSSGEGLPSTFQSIT.

This sequence belongs to the bacilliredoxin family.

In Salinibacter ruber (strain DSM 13855 / M31), this protein is Bacilliredoxin SRU_1493.